Here is a 72-residue protein sequence, read N- to C-terminus: Pre-histone-like nucleoprotein (72 aa).

Ser-2 carries the post-translational modification N-acetylserine; by host. Residues Ser-2–Gly-14 constitute a propeptide that is removed on maturation.

Belongs to the adenoviridae histone-like nucleoprotein family. As to quaternary structure, interacts with the core-capsid bridging protein; this interaction bridges the virus core to the capsid. Cleaved near the N-terminus by the viral protease during virion maturation to form the mature protein.

The protein localises to the host nucleus. It localises to the host nucleolus. The protein resides in the virion. Its function is as follows. Strongly bound to viral DNA and responsible for wrapping and condensing the viral DNA. Probably promotes viral genome import into the nucleus and is still associated with the viral DNA when the latter enters into the host nucleus. This chain is Pre-histone-like nucleoprotein, found in Galliformes (FAdV-1).